A 51-amino-acid chain; its full sequence is Lantibiotic flavucin (51 aa).

The propeptide occupies 1 to 20; it reads MSDFTLDFAEGDAADTVSPQ. A cross-link (lanthionine (Ser-Cys)) is located at residues 23–27; it reads SKSLC. 3 consecutive cross-links (beta-methyllanthionine (Thr-Cys)) follow at residues 28-31, 33-38, and 42-45; these read TPGC, TGWMMC, and TKGC.

Belongs to the type A lantibiotic family. Post-translationally, maturation of lantibiotics involves the enzymatic conversion of Thr, and Ser into dehydrated AA and the formation of thioether bonds with cysteine. This is followed by membrane translocation and cleavage of the modified precursor.

Antimicrobial activity depends on the dehydration degree and integrity of flavucin. In terms of biological role, lanthionine-containing peptide antibiotic (lantibiotic) active on certain Gram-positive bacteria. The bactericidal activity of lantibiotics is based on depolarization of energized bacterial cytoplasmic membranes, initiated by the formation of aqueous transmembrane pores. Flavucin has high antimicrobial activity against several pathogenic bacteria such as S.aureus, E.faecalis, E.faecium and L.monocytogenes. Is also active against the Gram-negative P.aeruginosa. The chain is Lantibiotic flavucin from Corynebacterium lipophiloflavum (strain ATCC 700352 / DSM 44291 / CCUG 37336 / JCM 10383 / DMMZ 1944).